A 466-amino-acid chain; its full sequence is Uronate isomerase (466 aa).

This sequence belongs to the metallo-dependent hydrolases superfamily. Uronate isomerase family.

It catalyses the reaction D-glucuronate = D-fructuronate. It carries out the reaction aldehydo-D-galacturonate = keto-D-tagaturonate. Its pathway is carbohydrate metabolism; pentose and glucuronate interconversion. The polypeptide is Uronate isomerase (Streptococcus agalactiae serotype III (strain NEM316)).